A 267-amino-acid chain; its full sequence is Thiamine thiazole synthase (267 aa).

NAD(+)-binding positions include Ser47, 66 to 67 (ER), Gly74, Val138, and 164 to 166 (HID). Fe cation-binding residues include Asp166 and His181. The NAD(+) site is built by Ser184 and Met230. Arg240 lines the glycine pocket.

It belongs to the THI4 family. Homooctamer; tetramer of dimers. Fe(2+) serves as cofactor.

The catalysed reaction is hydrogen sulfide + glycine + NAD(+) = ADP-5-ethyl-4-methylthiazole-2-carboxylate + nicotinamide + 3 H2O + H(+). It participates in cofactor biosynthesis; thiamine diphosphate biosynthesis. In terms of biological role, involved in the biosynthesis of the thiazole moiety of thiamine. Catalyzes the conversion of NAD and glycine to adenosine diphosphate 5-(2-hydroxyethyl)-4-methylthiazole-2-carboxylate (ADT), an adenylated thiazole intermediate, using free sulfide as a source of sulfur. The polypeptide is Thiamine thiazole synthase (Methanocaldococcus jannaschii (strain ATCC 43067 / DSM 2661 / JAL-1 / JCM 10045 / NBRC 100440) (Methanococcus jannaschii)).